The chain runs to 190 residues: NADH-quinone oxidoreductase subunit B (190 aa).

[4Fe-4S] cluster contacts are provided by Cys-69, Cys-70, Cys-134, and Cys-164.

This sequence belongs to the complex I 20 kDa subunit family. In terms of assembly, NDH-1 is composed of 14 different subunits. Subunits NuoB, C, D, E, F, and G constitute the peripheral sector of the complex. [4Fe-4S] cluster is required as a cofactor.

The protein resides in the cell inner membrane. It catalyses the reaction a quinone + NADH + 5 H(+)(in) = a quinol + NAD(+) + 4 H(+)(out). NDH-1 shuttles electrons from NADH, via FMN and iron-sulfur (Fe-S) centers, to quinones in the respiratory chain. Couples the redox reaction to proton translocation (for every two electrons transferred, four hydrogen ions are translocated across the cytoplasmic membrane), and thus conserves the redox energy in a proton gradient. The protein is NADH-quinone oxidoreductase subunit B of Chelativorans sp. (strain BNC1).